The following is a 443-amino-acid chain: Glucose-6-phosphate isomerase (443 aa).

Glu-285 functions as the Proton donor in the catalytic mechanism. Residues His-306 and Lys-420 contribute to the active site.

It belongs to the GPI family.

It is found in the cytoplasm. It catalyses the reaction alpha-D-glucose 6-phosphate = beta-D-fructose 6-phosphate. It functions in the pathway carbohydrate biosynthesis; gluconeogenesis. The protein operates within carbohydrate degradation; glycolysis; D-glyceraldehyde 3-phosphate and glycerone phosphate from D-glucose: step 2/4. Catalyzes the reversible isomerization of glucose-6-phosphate to fructose-6-phosphate. The polypeptide is Glucose-6-phosphate isomerase (Staphylococcus aureus (strain NCTC 8325 / PS 47)).